We begin with the raw amino-acid sequence, 437 residues long: Enolase-related protein 1 (437 aa).

2 residues coordinate substrate: His160 and Glu169. Glu212 acts as the Proton donor in catalysis. Residues Asp247, Glu296, and Asp321 each contribute to the Mg(2+) site. Substrate contacts are provided by Glu296 and Asp321. Lys346 (proton acceptor) is an active-site residue. Substrate is bound by residues 373 to 376 (SHRS) and Lys397.

This sequence belongs to the enolase family. Mg(2+) is required as a cofactor.

It catalyses the reaction (2R)-2-phosphoglycerate = phosphoenolpyruvate + H2O. The protein operates within carbohydrate degradation; glycolysis; pyruvate from D-glyceraldehyde 3-phosphate: step 4/5. This Saccharomyces cerevisiae (strain ATCC 204508 / S288c) (Baker's yeast) protein is Enolase-related protein 1 (ERR1).